The following is a 202-amino-acid chain: Securin (202 aa).

The tract at residues 1 to 92 (MATLIYVDKE…QKQPSFSAKK (92 aa)) is disordered. A2 carries the post-translational modification N-acetylalanine. Positions 61–64 (RKAL) match the D-box motif. 2 consecutive short sequence motifs (TEK-box) follow at residues 71–73 (TEK) and 94–96 (TEK). Residues 163–173 (XPSPVKMPSPP) carry the SH3-binding motif. S165 carries the post-translational modification Phosphoserine; by CDK1.

Belongs to the securin family. Interacts with RPS10 and DNAJA1. Interacts with the caspase-like ESPL1, and prevents its protease activity probably by covering its active site. Interacts with TP53 and blocks its activity probably by blocking its binding to DNA. Interacts with the Ku 70 kDa subunit of ds-DNA kinase. Interacts with PTTG1IP. Post-translationally, phosphorylated at Ser-165 by CDK1 during mitosis. In terms of processing, phosphorylated in vitro by ds-DNA kinase. Ubiquitinated through 'Lys-11' linkage of ubiquitin moieties by the anaphase promoting complex (APC) at the onset of anaphase, conducting to its degradation. 'Lys-11'-linked ubiquitination is mediated by the E2 ligase UBE2C/UBCH10.

Its subcellular location is the cytoplasm. It is found in the nucleus. Its function is as follows. Regulatory protein, which plays a central role in chromosome stability, in the p53/TP53 pathway, and DNA repair. Probably acts by blocking the action of key proteins. During the mitosis, it blocks Separase/ESPL1 function, preventing the proteolysis of the cohesin complex and the subsequent segregation of the chromosomes. At the onset of anaphase, it is ubiquitinated, conducting to its destruction and to the liberation of ESPL1. Its function is however not limited to a blocking activity, since it is required to activate ESPL1. Negatively regulates the transcriptional activity and related apoptosis activity of TP53. The negative regulation of TP53 may explain the strong transforming capability of the protein when it is overexpressed. May also play a role in DNA repair via its interaction with Ku, possibly by connecting DNA damage-response pathways with sister chromatid separation. The polypeptide is Securin (PTTG1) (Pan troglodytes (Chimpanzee)).